The sequence spans 140 residues: Cytochrome c-type biogenesis protein CcmE (140 aa).

The Cytoplasmic portion of the chain corresponds to 1–7 (MKRKHKR). Residues 8 to 28 (LLFVLASFCAAGCALLFILSE) form a helical; Signal-anchor for type II membrane protein membrane-spanning segment. Topologically, residues 29-140 (LRESVSFFYT…TAPKSSPEPK (112 aa)) are periplasmic. Heme contacts are provided by H121 and Y125.

It belongs to the CcmE/CycJ family.

It is found in the cell inner membrane. In terms of biological role, heme chaperone required for the biogenesis of c-type cytochromes. Transiently binds heme delivered by CcmC and transfers the heme to apo-cytochromes in a process facilitated by CcmF and CcmH. The chain is Cytochrome c-type biogenesis protein CcmE from Anaplasma marginale (strain St. Maries).